The primary structure comprises 1404 residues: DNA-directed RNA polymerase subunit beta' (1404 aa).

Zn(2+) contacts are provided by Cys70, Cys72, Cys85, and Cys88. 3 residues coordinate Mg(2+): Asp460, Asp462, and Asp464. Zn(2+)-binding residues include Cys825, Cys899, Cys906, and Cys909.

Belongs to the RNA polymerase beta' chain family. In terms of assembly, the RNAP catalytic core consists of 2 alpha, 1 beta, 1 beta' and 1 omega subunit. When a sigma factor is associated with the core the holoenzyme is formed, which can initiate transcription. Requires Mg(2+) as cofactor. Zn(2+) serves as cofactor.

The enzyme catalyses RNA(n) + a ribonucleoside 5'-triphosphate = RNA(n+1) + diphosphate. In terms of biological role, DNA-dependent RNA polymerase catalyzes the transcription of DNA into RNA using the four ribonucleoside triphosphates as substrates. In Nitrosomonas eutropha (strain DSM 101675 / C91 / Nm57), this protein is DNA-directed RNA polymerase subunit beta'.